The primary structure comprises 253 residues: UPF0174 protein jhp_1494 (253 aa).

The protein belongs to the UPF0174 family.

The sequence is that of UPF0174 protein jhp_1494 from Helicobacter pylori (strain J99 / ATCC 700824) (Campylobacter pylori J99).